The sequence spans 140 residues: Nucleoside diphosphate kinase (140 aa).

Residues lysine 11, phenylalanine 59, arginine 87, threonine 93, arginine 104, and asparagine 114 each coordinate ATP. Catalysis depends on histidine 117, which acts as the Pros-phosphohistidine intermediate.

This sequence belongs to the NDK family. Homotetramer. The cofactor is Mg(2+).

It is found in the cytoplasm. The enzyme catalyses a 2'-deoxyribonucleoside 5'-diphosphate + ATP = a 2'-deoxyribonucleoside 5'-triphosphate + ADP. It catalyses the reaction a ribonucleoside 5'-diphosphate + ATP = a ribonucleoside 5'-triphosphate + ADP. Its function is as follows. Major role in the synthesis of nucleoside triphosphates other than ATP. The ATP gamma phosphate is transferred to the NDP beta phosphate via a ping-pong mechanism, using a phosphorylated active-site intermediate. The sequence is that of Nucleoside diphosphate kinase from Gluconacetobacter diazotrophicus (strain ATCC 49037 / DSM 5601 / CCUG 37298 / CIP 103539 / LMG 7603 / PAl5).